The following is an 85-amino-acid chain: uncharacterized protein (85 aa).

This is an uncharacterized protein from Escherichia coli (Bacteriophage T4).